The sequence spans 109 residues: Set1 complex component sdc1 (109 aa).

The disordered stretch occupies residues 49–109 (QQKQKEIVNQ…SSNPGKNSAS (61 aa)). The span at 73-87 (STPTMAEQVQTSFSN) shows a compositional bias: polar residues. The segment covering 88–101 (PASTPLTQTSSPSS) has biased composition (low complexity).

This sequence belongs to the dpy-30 family. As to quaternary structure, component of the COMPASS (Set1C) complex composed of ash2, sdc1, set1, shg1, spp1, swd1, swd2 and swd3. Component of the Lid2 complex composed of ash2, jmj3, lid2, sdc1 and snt2.

It is found in the nucleus. The COMPASS (Set1C) complex specifically mono-, di- and trimethylates histone H3 to form H3K4me1/2/3, which subsequently activates gene expression by regulating transcription elongation and plays a role in telomere length maintenance. The polypeptide is Set1 complex component sdc1 (sdc1) (Schizosaccharomyces pombe (strain 972 / ATCC 24843) (Fission yeast)).